Consider the following 416-residue polypeptide: Serine hydroxymethyltransferase (416 aa).

(6S)-5,6,7,8-tetrahydrofolate is bound by residues leucine 121 and 125–127; that span reads GHL. Residue lysine 229 is modified to N6-(pyridoxal phosphate)lysine.

It belongs to the SHMT family. As to quaternary structure, homodimer. Requires pyridoxal 5'-phosphate as cofactor.

Its subcellular location is the cytoplasm. The catalysed reaction is (6R)-5,10-methylene-5,6,7,8-tetrahydrofolate + glycine + H2O = (6S)-5,6,7,8-tetrahydrofolate + L-serine. The protein operates within one-carbon metabolism; tetrahydrofolate interconversion. It participates in amino-acid biosynthesis; glycine biosynthesis; glycine from L-serine: step 1/1. Its function is as follows. Catalyzes the reversible interconversion of serine and glycine with tetrahydrofolate (THF) serving as the one-carbon carrier. This reaction serves as the major source of one-carbon groups required for the biosynthesis of purines, thymidylate, methionine, and other important biomolecules. Also exhibits THF-independent aldolase activity toward beta-hydroxyamino acids, producing glycine and aldehydes, via a retro-aldol mechanism. This chain is Serine hydroxymethyltransferase, found in Neisseria gonorrhoeae (strain ATCC 700825 / FA 1090).